We begin with the raw amino-acid sequence, 843 residues long: Protein translocase subunit SecA 1 (843 aa).

Residues Gln91, Gly109 to Thr113, and Asp498 contribute to the ATP site. Residues Glu799–Lys813 are compositionally biased toward basic and acidic residues. Positions Glu799–Asn826 are disordered. Positions 829, 831, 840, and 841 each coordinate Zn(2+).

Belongs to the SecA family. Monomer and homodimer. Part of the essential Sec protein translocation apparatus which comprises SecA, SecYEG and auxiliary proteins SecDF. Other proteins may also be involved. The cofactor is Zn(2+).

The protein localises to the cell membrane. It is found in the cytoplasm. The enzyme catalyses ATP + H2O + cellular proteinSide 1 = ADP + phosphate + cellular proteinSide 2.. Part of the Sec protein translocase complex. Interacts with the SecYEG preprotein conducting channel. Has a central role in coupling the hydrolysis of ATP to the transfer of proteins into and across the cell membrane, serving as an ATP-driven molecular motor driving the stepwise translocation of polypeptide chains across the membrane. The sequence is that of Protein translocase subunit SecA 1 from Staphylococcus aureus (strain MRSA252).